The following is a 325-amino-acid chain: UPF0285 protein MmarC6_0247 (325 aa).

It belongs to the UPF0285 family.

The polypeptide is UPF0285 protein MmarC6_0247 (Methanococcus maripaludis (strain C6 / ATCC BAA-1332)).